Reading from the N-terminus, the 1538-residue chain is Pentafunctional AROM polypeptide (1538 aa).

The segment at 1–384 (MGVPTKISIL…HEPRASTVSN (384 aa)) is 3-dehydroquinate synthase. Residues 44–46 (DTN), 81–84 (ESSK), 114–116 (GGV), and Asp119 contribute to the NAD(+) site. A 7-phospho-2-dehydro-3-deoxy-D-arabino-heptonate-binding site is contributed by Arg130. 139–140 (TT) is an NAD(+) binding site. Positions 146 and 152 each coordinate 7-phospho-2-dehydro-3-deoxy-D-arabino-heptonate. Lys161 serves as a coordination point for NAD(+). Asn162 serves as a coordination point for 7-phospho-2-dehydro-3-deoxy-D-arabino-heptonate. NAD(+)-binding positions include 179-182 (FLNT) and Asn190. Glu194 contacts Zn(2+). 7-phospho-2-dehydro-3-deoxy-D-arabino-heptonate is bound by residues 194–197 (EVIK) and Lys250. Glu260 functions as the Proton acceptor; for 3-dehydroquinate synthase activity in the catalytic mechanism. Residues 264-268 (RNLLN) and His271 each bind 7-phospho-2-dehydro-3-deoxy-D-arabino-heptonate. His271 serves as a coordination point for Zn(2+). The active-site Proton acceptor; for 3-dehydroquinate synthase activity is His275. Residues His287 and Lys356 each contribute to the 7-phospho-2-dehydro-3-deoxy-D-arabino-heptonate site. A Zn(2+)-binding site is contributed by His287. Positions 397 to 842 (VSPGVPKGLD…WDCLSQTFKV (446 aa)) are EPSP synthase. Cys824 acts as the For EPSP synthase activity in catalysis. The interval 866–973 (ASIFIIGMRG…RRKQNTFFVS (108 aa)) is shikimate kinase. 872 to 879 (GMRGAGKT) contacts ATP. The segment at 974 to 1194 (LTLPDLGLAA…AAPGQLSARE (221 aa)) is 3-dehydroquinase. Catalysis depends on His1097, which acts as the Proton acceptor; for 3-dehydroquinate dehydratase activity. The active-site Schiff-base intermediate with substrate; for 3-dehydroquinate dehydratase activity is Lys1125. The interval 1207–1538 (AKKFAVIGNP…YEHPVLNHSS (332 aa)) is shikimate dehydrogenase.

In the N-terminal section; belongs to the sugar phosphate cyclases superfamily. Dehydroquinate synthase family. The protein in the 2nd section; belongs to the EPSP synthase family. This sequence in the 3rd section; belongs to the shikimate kinase family. It in the 4th section; belongs to the type-I 3-dehydroquinase family. In the C-terminal section; belongs to the shikimate dehydrogenase family. In terms of assembly, homodimer. Zn(2+) is required as a cofactor.

Its subcellular location is the cytoplasm. The enzyme catalyses 7-phospho-2-dehydro-3-deoxy-D-arabino-heptonate = 3-dehydroquinate + phosphate. It catalyses the reaction 3-dehydroquinate = 3-dehydroshikimate + H2O. It carries out the reaction shikimate + NADP(+) = 3-dehydroshikimate + NADPH + H(+). The catalysed reaction is shikimate + ATP = 3-phosphoshikimate + ADP + H(+). The enzyme catalyses 3-phosphoshikimate + phosphoenolpyruvate = 5-O-(1-carboxyvinyl)-3-phosphoshikimate + phosphate. Its pathway is metabolic intermediate biosynthesis; chorismate biosynthesis; chorismate from D-erythrose 4-phosphate and phosphoenolpyruvate: step 2/7. It functions in the pathway metabolic intermediate biosynthesis; chorismate biosynthesis; chorismate from D-erythrose 4-phosphate and phosphoenolpyruvate: step 3/7. It participates in metabolic intermediate biosynthesis; chorismate biosynthesis; chorismate from D-erythrose 4-phosphate and phosphoenolpyruvate: step 4/7. The protein operates within metabolic intermediate biosynthesis; chorismate biosynthesis; chorismate from D-erythrose 4-phosphate and phosphoenolpyruvate: step 5/7. Its pathway is metabolic intermediate biosynthesis; chorismate biosynthesis; chorismate from D-erythrose 4-phosphate and phosphoenolpyruvate: step 6/7. In terms of biological role, the AROM polypeptide catalyzes 5 consecutive enzymatic reactions in prechorismate polyaromatic amino acid biosynthesis. In Ajellomyces capsulatus (strain NAm1 / WU24) (Darling's disease fungus), this protein is Pentafunctional AROM polypeptide.